A 284-amino-acid chain; its full sequence is Diaminopimelate epimerase (284 aa).

N20, Q53, and N73 together coordinate substrate. C82 serves as the catalytic Proton donor. Substrate-binding positions include 83–84 (GN), N167, N200, and 218–219 (ER). The active-site Proton acceptor is C227. Position 228–229 (228–229 (GS)) interacts with substrate.

Belongs to the diaminopimelate epimerase family. As to quaternary structure, homodimer.

It localises to the cytoplasm. The enzyme catalyses (2S,6S)-2,6-diaminopimelate = meso-2,6-diaminopimelate. It functions in the pathway amino-acid biosynthesis; L-lysine biosynthesis via DAP pathway; DL-2,6-diaminopimelate from LL-2,6-diaminopimelate: step 1/1. In terms of biological role, catalyzes the stereoinversion of LL-2,6-diaminopimelate (L,L-DAP) to meso-diaminopimelate (meso-DAP), a precursor of L-lysine and an essential component of the bacterial peptidoglycan. The polypeptide is Diaminopimelate epimerase (Xanthomonas axonopodis pv. citri (strain 306)).